Consider the following 363-residue polypeptide: G kinase-anchoring protein 1 (363 aa).

Residues 1-93 (MASAVLSSVP…SHAICNAQHE (93 aa)) form an interaction with IRS1 region. 2 disordered regions span residues 20 to 111 (QVDS…NWQE) and 145 to 171 (EYEN…HQGK). A phosphoserine mark is found at serine 23, serine 25, and serine 27. Over residues 39–48 (TGKSQTNKST) the composition is skewed to polar residues. Residues 43–75 (QTNKSTTNEKKREKRRKKKEQQQSEANELRNLA) adopt a coiled-coil conformation. A compositionally biased stretch (basic and acidic residues) spans 102–111 (KDSREENWQE). The residue at position 104 (serine 104) is a Phosphoserine; by PKG. Coiled-coil stretches lie at residues 126–158 (ADLE…QSKV) and 240–350 (EHNQ…YQGG).

This sequence belongs to the GKAP1 family. In terms of assembly, interacts with PRKG1 and IRS1.

The protein localises to the golgi apparatus. In terms of biological role, regulates insulin-dependent IRS1 tyrosine phosphorylation in adipocytes by modulating the availability of IRS1 to IR tyrosine kinase. Its association with IRS1 is required for insulin-induced translocation of SLC2A4 to the cell membrane. Involved in TNF-induced impairment of insulin-dependent IRS1 tyrosine phosphorylation. This is G kinase-anchoring protein 1 (GKAP1) from Bos taurus (Bovine).